The following is a 195-amino-acid chain: Putative archaetidylserine decarboxylase proenzyme (195 aa).

Ser-159 serves as the catalytic Schiff-base intermediate with substrate; via pyruvic acid. Ser-159 carries the post-translational modification Pyruvic acid (Ser); by autocatalysis.

Belongs to the phosphatidylserine decarboxylase family. PSD-A subfamily. In terms of assembly, heterodimer of a large membrane-associated beta subunit and a small pyruvoyl-containing alpha subunit. Pyruvate is required as a cofactor. Post-translationally, is synthesized initially as an inactive proenzyme. Formation of the active enzyme involves a self-maturation process in which the active site pyruvoyl group is generated from an internal serine residue via an autocatalytic post-translational modification. Two non-identical subunits are generated from the proenzyme in this reaction, and the pyruvate is formed at the N-terminus of the alpha chain, which is derived from the carboxyl end of the proenzyme. The autoendoproteolytic cleavage occurs by a canonical serine protease mechanism, in which the side chain hydroxyl group of the serine supplies its oxygen atom to form the C-terminus of the beta chain, while the remainder of the serine residue undergoes an oxidative deamination to produce ammonia and the pyruvoyl prosthetic group on the alpha chain. During this reaction, the Ser that is part of the protease active site of the proenzyme becomes the pyruvoyl prosthetic group, which constitutes an essential element of the active site of the mature decarboxylase. Is synthesized initially as an inactive proenzyme. Formation of the active enzyme involves a self-maturation process in which the active site pyruvoyl group is generated from an internal serine residue via an autocatalytic post-translational modification. Two non-identical subunits are generated from the proenzyme in this reaction, and the pyruvate is formed at the N-terminus of the alpha chain, which is derived from the carboxyl end of the proenzyme. The post-translation cleavage follows an unusual pathway, termed non-hydrolytic serinolysis, in which the side chain hydroxyl group of the serine supplies its oxygen atom to form the C-terminus of the beta chain, while the remainder of the serine residue undergoes an oxidative deamination to produce ammonia and the pyruvoyl prosthetic group on the alpha chain.

The protein resides in the cell membrane. The catalysed reaction is archaetidylserine + H(+) = archaetidylethanolamine + CO2. In terms of biological role, catalyzes the formation of archaetidylethanolamine (PtdEtn) from archaetidylserine (PtdSer). This is Putative archaetidylserine decarboxylase proenzyme from Archaeoglobus fulgidus (strain ATCC 49558 / DSM 4304 / JCM 9628 / NBRC 100126 / VC-16).